A 254-amino-acid polypeptide reads, in one-letter code: Claudin-16 (254 aa).

Residues M1–D22 are Cytoplasmic-facing. A helical transmembrane segment spans residues L23–T43. The Extracellular segment spans residues W44–R98. The helical transmembrane segment at A99–L119 threads the bilayer. Residues D120 to R134 are Cytoplasmic-facing. Residues I135–V155 traverse the membrane as a helical segment. The Extracellular segment spans residues W156–G188. A helical membrane pass occupies residues M189 to F209. The Cytoplasmic segment spans residues K210–V254. Positions T252–V254 match the Interaction with TJP1 motif.

This sequence belongs to the claudin family. In terms of assembly, can form heteropolymeric tight junction strands with other claudins. Interacts with CLDN19. Interacts (via PDZ-binding motif TRV) with TJP1 (via PDZ domain). Cannot form tight junction strands on its own. In terms of tissue distribution, expressed preferentially in kidney.

The protein resides in the cell junction. Its subcellular location is the tight junction. It localises to the cell membrane. The enzyme catalyses Mg(2+)(in) = Mg(2+)(out). It carries out the reaction Ca(2+)(in) = Ca(2+)(out). It catalyses the reaction Na(+)(in) = Na(+)(out). The catalysed reaction is K(+)(in) = K(+)(out). The enzyme catalyses Rb(+)(in) = Rb(+)(out). It carries out the reaction Cs(+)(in) = Cs(+)(out). It catalyses the reaction Li(+)(in) = Li(+)(out). Functionally, forms paracellular channels: coassembles with CLDN19 into tight junction strands with cation-selective channels through the strands, conveying epithelial permeability in a process known as paracellular tight junction permeability. Involved in the maintenance of ion gradients along the nephron. In the thick ascending limb (TAL) of Henle's loop, facilitates sodium paracellular permeability from the interstitial compartment to the lumen, contributing to the lumen-positive transepithelial potential that drives paracellular magnesium and calcium reabsorption. In Bos taurus (Bovine), this protein is Claudin-16 (CLDN16).